A 503-amino-acid polypeptide reads, in one-letter code: Efflux pump vrtL (503 aa).

The interval 1–59 (MSKLSDNHSSASEGEKEAGDLESGPTAISSEPSFDDADRDPNLITWDGPKDPENPKNWP) is disordered. Asn7 carries an N-linked (GlcNAc...) asparagine glycan. Helical transmembrane passes span 68-88 (WTVSLFVFISPVSSSMIAPAM), 101-121 (IEIYLSLSIFILAYSIGPIFF), 133-153 (LLQISNVWYLAWNLGCGFATT), 162-182 (FLAGIGGSAPLAIGGGAISDM), 194-214 (VYTLGPLLGPVVGPIAGGFIA), 221-241 (WVFWSTSAAALAVQVVGFFWL), 295-315 (IVFCMAIYMAYLFGISYLMFA), 329-349 (PGIGGLNYLSIAIGSFIGLFF), 377-397 (SLAVGSVISTIGLFWYGWSIG), 401-421 (WIMPNIGALIFAMGTISCLQG), 432-454 (TYAASAMAACAVLRSLCGFGFPL), and 471-491 (LLAFITMVVGWGAPFAFWHFG).

Belongs to the major facilitator superfamily.

The protein resides in the membrane. Efflux pump; part of the gene cluster that mediates the biosynthesis of viridicatumtoxin, a tetracycline-like fungal meroterpenoid with a unique, fused spirobicyclic ring system. The sequence is that of Efflux pump vrtL from Penicillium aethiopicum.